Reading from the N-terminus, the 318-residue chain is NADH-ubiquinone oxidoreductase chain 1 (318 aa).

The next 8 helical transmembrane spans lie at 2–22 (LLTN…FLTL), 69–89 (LMFI…WAPL), 102–122 (ILFI…SGWA), 147–167 (AIIL…TLTI), 172–192 (MWLI…TLAE), 231–251 (IILM…NPLF), 253–273 (ELHT…FLWI), and 294–314 (LPLT…LAGI).

The protein belongs to the complex I subunit 1 family.

It localises to the mitochondrion inner membrane. The enzyme catalyses a ubiquinone + NADH + 5 H(+)(in) = a ubiquinol + NAD(+) + 4 H(+)(out). Its function is as follows. Core subunit of the mitochondrial membrane respiratory chain NADH dehydrogenase (Complex I) that is believed to belong to the minimal assembly required for catalysis. Complex I functions in the transfer of electrons from NADH to the respiratory chain. The immediate electron acceptor for the enzyme is believed to be ubiquinone. The chain is NADH-ubiquinone oxidoreductase chain 1 (MT-ND1) from Bradypus variegatus (Brown-throated three-fingered sloth).